A 207-amino-acid polypeptide reads, in one-letter code: Octanoyltransferase (207 aa).

The region spanning 27–203 (ADTEDELWVV…HLETQFTPKA (177 aa)) is the BPL/LPL catalytic domain. Substrate contacts are provided by residues 66 to 73 (RGGQITYH), 133 to 135 (SLG), and 146 to 148 (GLA). The Acyl-thioester intermediate role is filled by cysteine 164.

Belongs to the LipB family.

Its subcellular location is the cytoplasm. It carries out the reaction octanoyl-[ACP] + L-lysyl-[protein] = N(6)-octanoyl-L-lysyl-[protein] + holo-[ACP] + H(+). It functions in the pathway protein modification; protein lipoylation via endogenous pathway; protein N(6)-(lipoyl)lysine from octanoyl-[acyl-carrier-protein]: step 1/2. Functionally, catalyzes the transfer of endogenously produced octanoic acid from octanoyl-acyl-carrier-protein onto the lipoyl domains of lipoate-dependent enzymes. Lipoyl-ACP can also act as a substrate although octanoyl-ACP is likely to be the physiological substrate. In Neisseria meningitidis serogroup B (strain ATCC BAA-335 / MC58), this protein is Octanoyltransferase.